Here is a 345-residue protein sequence, read N- to C-terminus: RNA pseudouridine synthase 1 (345 aa).

Asp134 is a catalytic residue.

This sequence belongs to the pseudouridine synthase RluA family.

It carries out the reaction a uridine in RNA = a pseudouridine in RNA. The polypeptide is RNA pseudouridine synthase 1 (Oryza sativa subsp. japonica (Rice)).